We begin with the raw amino-acid sequence, 368 residues long: Phosphate acyltransferase (368 aa).

Positions A334–T368 are disordered.

The protein belongs to the PlsX family. In terms of assembly, homodimer. Probably interacts with PlsY.

Its subcellular location is the cytoplasm. It catalyses the reaction a fatty acyl-[ACP] + phosphate = an acyl phosphate + holo-[ACP]. It participates in lipid metabolism; phospholipid metabolism. Functionally, catalyzes the reversible formation of acyl-phosphate (acyl-PO(4)) from acyl-[acyl-carrier-protein] (acyl-ACP). This enzyme utilizes acyl-ACP as fatty acyl donor, but not acyl-CoA. This Burkholderia thailandensis (strain ATCC 700388 / DSM 13276 / CCUG 48851 / CIP 106301 / E264) protein is Phosphate acyltransferase.